Consider the following 206-residue polypeptide: Small ribosomal subunit protein uS4 (206 aa).

The segment at 15–46 (MGENIWGRPKSPVNKREYGPGQHGQRRKNKLS) is disordered. Positions 94 to 157 (RRLDAIVYRA…RQLAIVLEAT (64 aa)) constitute an S4 RNA-binding domain.

The protein belongs to the universal ribosomal protein uS4 family. In terms of assembly, part of the 30S ribosomal subunit. Contacts protein S5. The interaction surface between S4 and S5 is involved in control of translational fidelity.

One of the primary rRNA binding proteins, it binds directly to 16S rRNA where it nucleates assembly of the body of the 30S subunit. Its function is as follows. With S5 and S12 plays an important role in translational accuracy. This Cereibacter sphaeroides (strain ATCC 17025 / ATH 2.4.3) (Rhodobacter sphaeroides) protein is Small ribosomal subunit protein uS4.